A 106-amino-acid chain; its full sequence is Iron-sulfur cluster assembly protein CyaY (106 aa).

This sequence belongs to the frataxin family.

Functionally, involved in iron-sulfur (Fe-S) cluster assembly. May act as a regulator of Fe-S biogenesis. The polypeptide is Iron-sulfur cluster assembly protein CyaY (Photorhabdus laumondii subsp. laumondii (strain DSM 15139 / CIP 105565 / TT01) (Photorhabdus luminescens subsp. laumondii)).